A 301-amino-acid chain; its full sequence is Glycine--tRNA ligase alpha subunit (301 aa).

It belongs to the class-II aminoacyl-tRNA synthetase family. Tetramer of two alpha and two beta subunits.

It localises to the cytoplasm. It catalyses the reaction tRNA(Gly) + glycine + ATP = glycyl-tRNA(Gly) + AMP + diphosphate. The chain is Glycine--tRNA ligase alpha subunit from Alteromonas mediterranea (strain DSM 17117 / CIP 110805 / LMG 28347 / Deep ecotype).